A 56-amino-acid chain; its full sequence is Bowman-Birk type proteinase inhibitor I-2B (56 aa).

Cystine bridges form between Cys-10-Cys-25, Cys-15-Cys-23, Cys-32-Cys-39, and Cys-36-Cys-51.

Belongs to the Bowman-Birk serine protease inhibitor family.

The sequence is that of Bowman-Birk type proteinase inhibitor I-2B from Triticum aestivum (Wheat).